A 523-amino-acid chain; its full sequence is Thiamine pathway transporter THI73 (523 aa).

Topologically, residues 1-79 are cytoplasmic; the sequence is MKNMSQRSMD…LSPKVLRKVD (79 aa). Residues 80–100 traverse the membrane as a helical segment; the sequence is LFILPFLCCTYLLMFLDKALL. Over 101–118 the chain is Extracellular; it reads NYAASMGIKDHLKGNEFS. Residues 119–139 traverse the membrane as a helical segment; the sequence is NLGTIFSAAYIFMEPVVTYLI. Residues 140–141 lie on the Cytoplasmic side of the membrane; it reads QK. A helical membrane pass occupies residues 142–162; sequence FPISKILGTFITVWGIVLACH. Over 163 to 176 the chain is Extracellular; the sequence is AACKTYASLMVVRT. A helical membrane pass occupies residues 177–197; it reads LLGLFESSSAVGCIAISGMYY. At 198 to 207 the chain is on the cytoplasmic side; the sequence is TKSEQSARIG. A helical membrane pass occupies residues 208 to 228; that stretch reads FWATQAGTGYIVGGLISFGFL. Topologically, residues 229 to 239 are extracellular; the sequence is HYHGTAFTSWQ. Residues 240–260 traverse the membrane as a helical segment; that stretch reads IMFLVVGLVTVAFGVLTFLYL. At 261–312 the chain is on the cytoplasmic side; the sequence is PDNVTNAWFLNKEEKIQVVEHIRANQTGLETKKFKKQQVKELFLHDKFTWPM. The chain crosses the membrane as a helical span at residues 313–333; it reads LLLTACSQISTGAIGTFSVTI. Topologically, residues 334–345 are extracellular; the sequence is TGTFGFDKYETA. The chain crosses the membrane as a helical span at residues 346–366; sequence LLQLPIGAITAMIILITTQML. At 367 to 371 the chain is on the cytoplasmic side; that stretch reads SRWGH. Residues 372–392 form a helical membrane-spanning segment; that stretch reads ITLITTSMYIPAIIGCIVLIS. Residues 393–400 lie on the Extracellular side of the membrane; sequence LPLSHKIG. The chain crosses the membrane as a helical span at residues 401-421; that stretch reads NLFSLYLLYSGSCVITNIYIW. At 422–432 the chain is on the cytoplasmic side; sequence NSCNTSGYTKR. Residues 433 to 452 form a helical membrane-spanning segment; it reads VFRNAITMIVYNVSCIIAPQ. Topologically, residues 453-466 are extracellular; that stretch reads MFRAYSAPRYIPAK. The chain crosses the membrane as a helical span at residues 467–487; it reads IALLVTQCVCVPLQLYIGYIC. The Cytoplasmic segment spans residues 488 to 523; sequence KKENEKRDKEQEGQERKKYQFLDLTDIENRNFRYIY.

The protein belongs to the major facilitator superfamily. Allantoate permease family.

Its subcellular location is the endoplasmic reticulum membrane. It is found in the cell membrane. Its function is as follows. Transports either thiamine or, rather, a related metabolite involved in the thiamine biosynthesis pathway. This Saccharomyces cerevisiae (strain ATCC 204508 / S288c) (Baker's yeast) protein is Thiamine pathway transporter THI73 (THI73).